Consider the following 1232-residue polypeptide: MTVTPHVGGPLEELLERSGRFFTPGEFSADLRTVTRRGGREGDVFYRDRWSHDKVVRSTHGVNCTGSCSWKIYVKDGIITWETQQTDYPSVGPDRPEYEPRGCPRGASFSWYSYSPTRVRYPYARGVLVEMYREAKTRLGDPVLAWADIQADPERRRRYQQARGKGGLVRVSWAEASEMVAAAHVHTIKTYGPDRVAGFSPIPAMSMVSHAAGSRFVELIGGVMTSFYDWYADLPVASPQVFGDQTDVPESGDWWDASYLVMWGSNVPITRTPDAHWMAEARYRGAKVVVVSPDYADNTKFADEWVRCAAGTDTALAMAMGHVILSECYVRNQVPFFVDYVRRYTDLPFLIKLEKRGDLLVPGKFLTAADIGEESENAAFKPALLDELTNTVVVPQGSLGFRFGEDGVGKWNLDLGSVVPALSVEMDKAVNGDRSAELVTLPSFDTIDGHGETVSRGVPVRRAGKHLVCTVFDLMLAHYGVARAGLPGEWPTGYHDRTQQNTPAWQESITGVPAAQAIRFAKEFARNATESGGRSMIIMGGGICHWFHSDVMYRSVLALLMLTGSMGRNGGGWAHYVGQEKVRPLTGWQTMAMATDWSRPPRQVPGASYWYAHTDQWRYDGYGADKLASPVGRGRFAGKHTMDLLTSATAMGWSPFYPQFDRSSLDVADEARAAGRDVGDYVAEQLAQHKLKLSITDPDNPVNWPRVLTVWRANLIGSSGKGGEYFLRHLLGTDSNVQSDPPTDGVHPRDVVWDSDIPEGKLDLIMSIDFRMTSTTLVSDVVLPAATWYEKSDLSSTDMHPYVHSFSPAIDPPWETRSDFDAFAAIARAFSALAKRHLGTRTDVVLTALQHDTPDEMAYPDGTERDWLATGEVPVPGRTMSKLTVVERDYTAIYDKWLTLGPLIDQFGMTTKGYTVHPFREVSELAANFGVMNSGVAVGRPAITTAKRMADVILALSGTCNGRLAVEGFLELEKRTGQRLAHLAEGSEERRITYADTQARPVPVITSPEWSGSESGGRRYAPFTINIEHLKPFHTLTGRMHFYLAHDWVEELGEQLPVYRPPLDMARLFNQPELGPTDDGLGLTVRYLTPHSKWSFHSTYQDNLYMLSLSRGGPTMWMSPGDAAKINVRDNDWVEAVNANGIYVCRAIVSHRMPEGVVFVYHVQERTVDTPRTETNGKRGGNHNALTRVRIKPSHLAGGYGQHAFAFNYLGPTGNQRDEVTVVRRRSQEVRY.

One can recognise a 4Fe-4S Mo/W bis-MGD-type domain in the interval Asp-53–Thr-117. 4 residues coordinate [4Fe-4S] cluster: His-60, Cys-64, Cys-68, and Cys-103. A Mo-bis(molybdopterin guanine dinucleotide)-binding site is contributed by Asp-233.

Belongs to the prokaryotic molybdopterin-containing oxidoreductase family. [4Fe-4S] cluster is required as a cofactor. Requires Mo-bis(molybdopterin guanine dinucleotide) as cofactor.

The protein resides in the cell membrane. The enzyme catalyses nitrate + a quinol = a quinone + nitrite + H2O. Its function is as follows. The alpha chain is the actual site of nitrate reduction. This chain is Nitrate reductase alpha subunit (narG), found in Mycobacterium tuberculosis (strain CDC 1551 / Oshkosh).